The sequence spans 230 residues: PsbP-like protein 1, chloroplastic (230 aa).

Belongs to the PsbP family.

The protein localises to the plastid. It localises to the chloroplast thylakoid lumen. In terms of biological role, required for efficient repair of photodamaged PSII, but not tightly associated with the complex. The polypeptide is PsbP-like protein 1, chloroplastic (PPL1) (Arabidopsis thaliana (Mouse-ear cress)).